A 231-amino-acid chain; its full sequence is tRNA (guanine-N(7)-)-methyltransferase (231 aa).

4 residues coordinate S-adenosyl-L-methionine: aspartate 57, glutamate 82, aspartate 109, and aspartate 132. The active site involves aspartate 132. Substrate-binding positions include lysine 136, aspartate 168, and 205–208 (TKFE). The interval 194 to 214 (AFVPPPPPRPQTKFERRGLRK) is disordered.

The protein belongs to the class I-like SAM-binding methyltransferase superfamily. TrmB family.

The enzyme catalyses guanosine(46) in tRNA + S-adenosyl-L-methionine = N(7)-methylguanosine(46) in tRNA + S-adenosyl-L-homocysteine. Its pathway is tRNA modification; N(7)-methylguanine-tRNA biosynthesis. In terms of biological role, catalyzes the formation of N(7)-methylguanine at position 46 (m7G46) in tRNA. This is tRNA (guanine-N(7)-)-methyltransferase from Halorhodospira halophila (strain DSM 244 / SL1) (Ectothiorhodospira halophila (strain DSM 244 / SL1)).